Consider the following 467-residue polypeptide: Glutamate--tRNA ligase (467 aa).

The 'HIGH' region motif lies at 9-19 (PSPTGNLHIGS). The short motif at 237-241 (KISKR) is the 'KMSKS' region element. Position 240 (lysine 240) interacts with ATP.

Belongs to the class-I aminoacyl-tRNA synthetase family. Glutamate--tRNA ligase type 1 subfamily. In terms of assembly, monomer.

It localises to the cytoplasm. The catalysed reaction is tRNA(Glu) + L-glutamate + ATP = L-glutamyl-tRNA(Glu) + AMP + diphosphate. Catalyzes the attachment of glutamate to tRNA(Glu) in a two-step reaction: glutamate is first activated by ATP to form Glu-AMP and then transferred to the acceptor end of tRNA(Glu). The protein is Glutamate--tRNA ligase of Buchnera aphidicola subsp. Acyrthosiphon pisum (strain APS) (Acyrthosiphon pisum symbiotic bacterium).